Consider the following 279-residue polypeptide: Digeranylgeranylglyceryl phosphate synthase (279 aa).

Helical transmembrane passes span 14 to 34 (VKNCLTASFGTIIGGLIASNF), 36 to 56 (FGLIGYILLASLIVFLVCGFG), 94 to 114 (LMISGIIISLFNMICFAIALI), 131 to 153 (IIGNLIVAYLTGSIFIFGGASVG), 157 to 175 (ITLILFLCALFATWSREII), 201 to 221 (IFVAIGFLLCSILLSPLPYIL), 224 to 244 (FGAPYLMAIMICNVLFILAVL), and 259 to 279 (SKYIKIIMNLVLLSFVIGSLM).

The protein belongs to the UbiA prenyltransferase family. DGGGP synthase subfamily. Requires Mg(2+) as cofactor.

The protein localises to the cell membrane. The enzyme catalyses sn-3-O-(geranylgeranyl)glycerol 1-phosphate + (2E,6E,10E)-geranylgeranyl diphosphate = 2,3-bis-O-(geranylgeranyl)-sn-glycerol 1-phosphate + diphosphate. It participates in membrane lipid metabolism; glycerophospholipid metabolism. In terms of biological role, prenyltransferase that catalyzes the transfer of the geranylgeranyl moiety of geranylgeranyl diphosphate (GGPP) to the C2 hydroxyl of (S)-3-O-geranylgeranylglyceryl phosphate (GGGP). This reaction is the second ether-bond-formation step in the biosynthesis of archaeal membrane lipids. The protein is Digeranylgeranylglyceryl phosphate synthase of Methanococcus aeolicus (strain ATCC BAA-1280 / DSM 17508 / OCM 812 / Nankai-3).